The sequence spans 74 residues: Cell division protein ZapB (74 aa).

Positions 2 to 74 (TLDLLEQLES…LVGKIEETES (73 aa)) form a coiled coil.

This sequence belongs to the ZapB family. As to quaternary structure, homodimer. The ends of the coiled-coil dimer bind to each other, forming polymers. Interacts with FtsZ.

Its subcellular location is the cytoplasm. Its function is as follows. Non-essential, abundant cell division factor that is required for proper Z-ring formation. It is recruited early to the divisome by direct interaction with FtsZ, stimulating Z-ring assembly and thereby promoting cell division earlier in the cell cycle. Its recruitment to the Z-ring requires functional FtsA or ZipA. The polypeptide is Cell division protein ZapB (Psychromonas ingrahamii (strain DSM 17664 / CCUG 51855 / 37)).